The chain runs to 206 residues: Small ribosomal subunit protein uS5 (206 aa).

Polar residues predominate over residues 1–23 (MTDTPTKQENQSKTENPPSSNAN). A disordered region spans residues 1-52 (MTDTPTKQENQSKTENPPSSNANEQRRGNRNNDRKRNRRGDSKNERDSEWQE). Over residues 24-52 (EQRRGNRNNDRKRNRRGDSKNERDSEWQE) the composition is skewed to basic and acidic residues. The S5 DRBM domain maps to 50 to 113 (WQERVVQIRR…SDGKKHLVRV (64 aa)).

This sequence belongs to the universal ribosomal protein uS5 family. In terms of assembly, part of the 30S ribosomal subunit. Contacts proteins S4 and S8.

Its function is as follows. With S4 and S12 plays an important role in translational accuracy. Functionally, located at the back of the 30S subunit body where it stabilizes the conformation of the head with respect to the body. The chain is Small ribosomal subunit protein uS5 from Prochlorococcus marinus subsp. pastoris (strain CCMP1986 / NIES-2087 / MED4).